A 223-amino-acid chain; its full sequence is Ras-related protein Rab-21 (223 aa).

An N-acetylalanine modification is found at Ala2. Gly26, Gly29, Lys30, Thr31, Ser32, Asn43, Asp44, His46, Thr48, and Thr49 together coordinate GTP. A Mg(2+)-binding site is contributed by Thr31. The Switch 1 motif lies at 41–54; that stretch reads KFNDKHITTLQASF. Mg(2+) is bound by residues Thr49 and Asp72. The short motif at 74-92 is the Switch 2 element; sequence AGQERFHALGPIYYRDSNG. 6 residues coordinate GTP: Gly75, Asn130, Lys131, Asp133, Ala161, and Lys162. Residues Cys219 and Cys220 are each lipidated (S-geranylgeranyl cysteine). Cys220 is modified (cysteine methyl ester). Positions 221–223 are cleaved as a propeptide — removed in mature form; the sequence is SSG.

Belongs to the small GTPase superfamily. Rab family. As to quaternary structure, interacts with the cytoplasmic tail of integrins ITGA1, ITGA2, ITGA5, ITGA6, ITGA11 and ITGB1; this interaction is dependent upon its GDP/GTP cycle. Interacts with ANKRD27. Interacts (active GTP-bound form) with TMED10; the interaction is indirect and regulates TMED10 abundance and localization at the Golgi. Requires Mg(2+) as cofactor.

The protein resides in the endoplasmic reticulum membrane. It localises to the golgi apparatus. The protein localises to the trans-Golgi network. It is found in the golgi apparatus membrane. Its subcellular location is the early endosome membrane. The protein resides in the cytoplasmic vesicle membrane. It localises to the cleavage furrow. The protein localises to the cell projection. It is found in the neuron projection. The catalysed reaction is GTP + H2O = GDP + phosphate + H(+). With respect to regulation, regulated by guanine nucleotide exchange factors (GEFs) including ANKRD27 and RABGEF1, which promote the exchange of bound GDP for free GTP. Regulated by GTPase activating proteins (GAPs) which increase the GTP hydrolysis activity. Inhibited by GDP dissociation inhibitors (GDIs). Its function is as follows. The small GTPases Rab are key regulators of intracellular membrane trafficking, from the formation of transport vesicles to their fusion with membranes. Rabs cycle between an inactive GDP-bound form and an active GTP-bound form that is able to recruit to membranes different sets of downstream effectors directly responsible for vesicle formation, movement, tethering and fusion. RAB21 is involved in membrane trafficking control. Regulates integrin internalization and recycling, but does not influence the traffic of endosomally translocated receptors in general. As a result, may regulate cell adhesion and migration. During the mitosis of adherent cells, controls the endosomal trafficking of integrins which is required for the successful completion of cytokinesis. Involved in neurite growth. Modulates protein levels of the cargo receptors TMED2 and TMED10, and required for appropriate Golgi localization of TMED10. The sequence is that of Ras-related protein Rab-21 (RAB21) from Canis lupus familiaris (Dog).